We begin with the raw amino-acid sequence, 182 residues long: Large ribosomal subunit protein uL16 (182 aa).

This sequence belongs to the universal ribosomal protein uL16 family.

In Pyrobaculum neutrophilum (strain DSM 2338 / JCM 9278 / NBRC 100436 / V24Sta) (Thermoproteus neutrophilus), this protein is Large ribosomal subunit protein uL16.